A 360-amino-acid polypeptide reads, in one-letter code: sn-glycerol-3-phosphate import ATP-binding protein UgpC (360 aa).

In terms of domain architecture, ABC transporter spans 4-235 (LSLKGVRKSY…PATTFVASFI (232 aa)). 37–44 (GPSGCGKS) contacts ATP.

It belongs to the ABC transporter superfamily. sn-glycerol-3-phosphate importer (TC 3.A.1.1.3) family. In terms of assembly, the complex is composed of two ATP-binding proteins (UgpC), two transmembrane proteins (UgpA and UgpE) and a solute-binding protein (UgpB).

It localises to the cell inner membrane. It catalyses the reaction sn-glycerol 3-phosphate(out) + ATP + H2O = sn-glycerol 3-phosphate(in) + ADP + phosphate + H(+). Its function is as follows. Part of the ABC transporter complex UgpBAEC involved in sn-glycerol-3-phosphate (G3P) import. Responsible for energy coupling to the transport system. This chain is sn-glycerol-3-phosphate import ATP-binding protein UgpC, found in Burkholderia thailandensis (strain ATCC 700388 / DSM 13276 / CCUG 48851 / CIP 106301 / E264).